A 446-amino-acid polypeptide reads, in one-letter code: Coagulation factor VII (446 aa).

Residues 1 to 24 (MVPQAHGLLLLCFLLQLQGPLGTA) form the signal peptide. A propeptide spanning residues 25–41 (VFITQEEAHGVLHRQRR) is cleaved from the precursor. Positions 42-86 (ANSLLEELWPGSLERECNEEQCSFEEAREIFKSPERTKQFWIVYS) constitute a Gla domain. Glu47, Glu48, Glu55, Glu57, Glu60, Glu61, Glu66, Glu67, Glu70, and Glu76 each carry 4-carboxyglutamate. Cys58 and Cys63 are disulfide-bonded. The EGF-like 1; calcium-binding domain occupies 87 to 123 (DGDQCASNPCQNGGTCQDHLKSYVCFCLLDFEGRNCE). 10 disulfides stabilise this stretch: Cys91–Cys102, Cys96–Cys111, Cys113–Cys122, Cys132–Cys143, Cys139–Cys153, Cys155–Cys168, Cys176–Cys303, Cys200–Cys205, Cys219–Cys235, and Cys351–Cys370. Ser93 carries an O-linked (Glc...) serine; alternate glycan. Ser93 carries O-linked (Xyl...) serine; alternate glycosylation. A (3R)-3-hydroxyaspartate modification is found at Asp104. The EGF-like 2 domain occupies 128–169 (EQLICANENGDCDQYCRDHVGTKRTCSCHEDYTLQPDEVSCK). An N-linked (GlcNAc...) asparagine glycan is attached at Asn186. The Peptidase S1 domain occupies 194 to 433 (IVGGNVCPKG…YIDWLVRHMD (240 aa)). Residue His234 is the Charge relay system of the active site. N-linked (GlcNAc...) asparagine glycosylation is present at Asn244. Catalysis depends on Asp283, which acts as the Charge relay system. Asp379 is a binding site for substrate. Cys381 and Cys409 are disulfide-bonded. Ser385 acts as the Charge relay system in catalysis.

It belongs to the peptidase S1 family. In terms of assembly, heterodimer of a light chain and a heavy chain linked by a disulfide bond. The vitamin K-dependent, enzymatic carboxylation of some glutamate residues allows the modified protein to bind calcium. In terms of processing, the iron and 2-oxoglutarate dependent 3-hydroxylation of aspartate and asparagine is (R) stereospecific within EGF domains. Post-translationally, can be either O-glucosylated or O-xylosylated at Ser-93 by POGLUT1. As to expression, plasma and liver.

The protein localises to the secreted. The catalysed reaction is Selective cleavage of Arg-|-Ile bond in factor X to form factor Xa.. Initiates the extrinsic pathway of blood coagulation. Serine protease that circulates in the blood in a zymogen form. Factor VII is converted to factor VIIa by factor Xa, factor XIIa, factor IXa, or thrombin by minor proteolysis. In the presence of tissue factor and calcium ions, factor VIIa then converts factor X to factor Xa by limited proteolysis. Factor VIIa also converts factor IX to factor IXa in the presence of tissue factor and calcium. This Mus musculus (Mouse) protein is Coagulation factor VII (F7).